Reading from the N-terminus, the 785-residue chain is Cullin-3 (785 aa).

A Cullin neddylation domain is found at 715 to 777 (SRKHQADACI…REYLQRQADN (63 aa)). Residue Lys-729 forms a Glycyl lysine isopeptide (Lys-Gly) (interchain with G-Cter in NEDD8) linkage.

It belongs to the cullin family. In terms of assembly, probable component of multiple cullin-RING-based BC3B (BTB-CUL3-BTB) E3 ubiquitin-protein ligase complexes formed by cul-3, rbx-1 and a variable BTB domain-containing protein as adapter and substrate recognition component. Interacts with btb1, btb2, btb3, nedd8 and pip1. Post-translationally, neddylated; enhancing the ubiquitin-ligase activity.

The protein localises to the cytoplasm. Its pathway is protein modification; protein ubiquitination. Probable core component of multiple cullin-RING-based BC3B (BTB-CUL3-BTB) E3 ubiquitin-protein ligase complexes which mediate the ubiquitination and subsequent proteasomal degradation of target proteins. As a scaffold protein may contribute to catalysis through positioning of the substrate and the ubiquitin-conjugating enzyme. The functional specificity of the BC3B complex depends on the substrate recognition component. Involved in ubiquitin-mediated degradation of btb3. This is Cullin-3 (cul3) from Schizosaccharomyces pombe (strain 972 / ATCC 24843) (Fission yeast).